Reading from the N-terminus, the 299-residue chain is Probable lipid kinase YegS (299 aa).

Residues 2 to 133 form the DAGKc domain; that stretch reads AEFPASLLIL…IDMAQVNKQT (132 aa). Residues Thr-40, 66-72, and Thr-95 each bind ATP; that span reads GDGTINE. Mg(2+)-binding residues include Leu-215, Asp-218, and Leu-220. Glu-271 functions as the Proton acceptor in the catalytic mechanism.

Belongs to the diacylglycerol/lipid kinase family. YegS lipid kinase subfamily. Mg(2+) serves as cofactor. The cofactor is Ca(2+).

The protein resides in the cytoplasm. In terms of biological role, probably phosphorylates lipids; the in vivo substrate is unknown. The sequence is that of Probable lipid kinase YegS from Escherichia coli (strain K12 / MC4100 / BW2952).